The following is a 154-amino-acid chain: Troponin C, isoallergen Bla g 6.0301 (154 aa).

4 EF-hand domains span residues 11–46 (EQIS…MGQP), 47–82 (FNRR…FIIE), 87–122 (AMEK…LDEQ), and 123–154 (LTSD…MMTG). 5 residues coordinate Ca(2+): D60, D62, S64, R66, and E71. Ca(2+) is bound by residues D136, D138, S140, T142, and E147.

This sequence belongs to the troponin C family.

Troponin is the central regulatory protein of striated muscle contraction. It consists of three components: Troponin-I (Tn-I) which is the inhibitor of actomyosin ATPase, Troponin-T (Tn-T) which contains the binding site for tropomyosin and Troponin-C (Tn-C). The binding of calcium to Tn-C abolishes the inhibitory action of Tn on actin filaments. This Blattella germanica (German cockroach) protein is Troponin C, isoallergen Bla g 6.0301.